A 200-amino-acid polypeptide reads, in one-letter code: Large ribosomal subunit protein uL4 (200 aa).

A disordered region spans residues threonine 42–glycine 65.

This sequence belongs to the universal ribosomal protein uL4 family. Part of the 50S ribosomal subunit.

Its function is as follows. One of the primary rRNA binding proteins, this protein initially binds near the 5'-end of the 23S rRNA. It is important during the early stages of 50S assembly. It makes multiple contacts with different domains of the 23S rRNA in the assembled 50S subunit and ribosome. In terms of biological role, forms part of the polypeptide exit tunnel. This is Large ribosomal subunit protein uL4 from Vibrio cholerae serotype O1 (strain ATCC 39541 / Classical Ogawa 395 / O395).